A 301-amino-acid polypeptide reads, in one-letter code: Amylovoran biosynthesis glycosyltransferase AmsB (301 aa).

The protein belongs to the glycosyltransferase 2 family.

Its pathway is glycan metabolism; exopolysaccharide biosynthesis. Its function is as follows. Involved in the biosynthesis of amylovoran, which functions as a virulence factor. May function as a glycosyl transferase which transfers galactose from UDP-galactose to a lipid-linked amylovoran-subunit precursor. In Erwinia amylovora (Fire blight bacteria), this protein is Amylovoran biosynthesis glycosyltransferase AmsB (amsB).